Reading from the N-terminus, the 126-residue chain is Hydrogenase maturation factor HypA (126 aa).

Histidine 2 is a binding site for Ni(2+). Cysteine 78, cysteine 81, cysteine 97, and cysteine 100 together coordinate Zn(2+).

The protein belongs to the HypA/HybF family.

Its function is as follows. Involved in the maturation of [NiFe] hydrogenases. Required for nickel insertion into the metal center of the hydrogenase. This Methanococcus maripaludis (strain DSM 14266 / JCM 13030 / NBRC 101832 / S2 / LL) protein is Hydrogenase maturation factor HypA.